Consider the following 547-residue polypeptide: Glucose-6-phosphate isomerase (547 aa).

The Proton donor role is filled by Glu-354. Residues His-385 and Lys-513 contribute to the active site.

It belongs to the GPI family.

It localises to the cytoplasm. The catalysed reaction is alpha-D-glucose 6-phosphate = beta-D-fructose 6-phosphate. Its pathway is carbohydrate biosynthesis; gluconeogenesis. The protein operates within carbohydrate degradation; glycolysis; D-glyceraldehyde 3-phosphate and glycerone phosphate from D-glucose: step 2/4. Its function is as follows. Catalyzes the reversible isomerization of glucose-6-phosphate to fructose-6-phosphate. The sequence is that of Glucose-6-phosphate isomerase from Endomicrobium trichonymphae.